We begin with the raw amino-acid sequence, 303 residues long: CDAN1-interacting nuclease 1 (303 aa).

The protein localises to the nucleus. The protein resides in the cytoplasm. Its function is as follows. May play a role in erythroid cell differentiation. In Xenopus laevis (African clawed frog), this protein is CDAN1-interacting nuclease 1.